The sequence spans 140 residues: Ribosome-binding factor A (140 aa).

Residues 116-140 (RERQERGEIPPGSDDAQNCHDDEPS) are disordered.

Belongs to the RbfA family. As to quaternary structure, monomer. Binds 30S ribosomal subunits, but not 50S ribosomal subunits or 70S ribosomes.

Its subcellular location is the cytoplasm. Functionally, one of several proteins that assist in the late maturation steps of the functional core of the 30S ribosomal subunit. Associates with free 30S ribosomal subunits (but not with 30S subunits that are part of 70S ribosomes or polysomes). Required for efficient processing of 16S rRNA. May interact with the 5'-terminal helix region of 16S rRNA. This Synechococcus sp. (strain WH7803) protein is Ribosome-binding factor A.